The following is a 96-amino-acid chain: Co-chaperonin GroES (96 aa).

It belongs to the GroES chaperonin family. As to quaternary structure, heptamer of 7 subunits arranged in a ring. Interacts with the chaperonin GroEL.

It is found in the cytoplasm. In terms of biological role, together with the chaperonin GroEL, plays an essential role in assisting protein folding. The GroEL-GroES system forms a nano-cage that allows encapsulation of the non-native substrate proteins and provides a physical environment optimized to promote and accelerate protein folding. GroES binds to the apical surface of the GroEL ring, thereby capping the opening of the GroEL channel. The sequence is that of Co-chaperonin GroES from Photobacterium profundum (strain SS9).